The following is a 395-amino-acid chain: Ankyrin repeat domain-containing protein 65 (395 aa).

ANK repeat units lie at residues 52-81, 85-114, 118-147, 151-180, 185-212, 213-241, 245-274, 278-307, 311-340, and 344-373; these read QAWGHLLQAVWKGHTGLVTQLLRQGASVEE, AGRTPLHLAVLRGHVSLVRLLLQRGAQVGA, AGRTPLHEAAWHGPSRVAELLLRRGAPANA, AGLTPLHWAAALGRTLMVGHLLAAPHPGPT, RGWTAGHWAAAGGQMAVLELLGANGGAR, LDSVLLVAAAAGRATALRLLLAQGAPVDA, VGATVLGVAAGLGRRQDMEVLLEHGADPSL, HGRSALHRAAAGGHLLAVQLLAAWGAEVDS, LGLTPLHHAARGGHIEVTGHLLDRGAEINA, and LHKTPLHLAMEHGHGPTAELLLSRGASPTL.

The protein is Ankyrin repeat domain-containing protein 65 (ANKRD65) of Bos taurus (Bovine).